A 732-amino-acid chain; its full sequence is Catalase-peroxidase (732 aa).

Residues 1–11 show a composition bias toward basic and acidic residues; the sequence is MDAKTDDKDGG. The segment at 1 to 24 is disordered; the sequence is MDAKTDDKDGGKCPFPHGGGRGRR. Positions 97 to 219 form a cross-link, tryptophyl-tyrosyl-methioninium (Trp-Tyr) (with M-245); sequence WHSAGTYRTT…LGAVQMGLIY (123 aa). The Proton acceptor role is filled by H98. Residues 219–245 constitute a cross-link (tryptophyl-tyrosyl-methioninium (Tyr-Met) (with W-97)); that stretch reads YVNPEGPNGNPDPVAAAKDIRETFARM. H260 is a binding site for heme b.

It belongs to the peroxidase family. Peroxidase/catalase subfamily. In terms of assembly, homodimer or homotetramer. The cofactor is heme b. In terms of processing, formation of the three residue Trp-Tyr-Met cross-link is important for the catalase, but not the peroxidase activity of the enzyme.

The catalysed reaction is H2O2 + AH2 = A + 2 H2O. The enzyme catalyses 2 H2O2 = O2 + 2 H2O. In terms of biological role, bifunctional enzyme with both catalase and broad-spectrum peroxidase activity. This is Catalase-peroxidase from Rhodopseudomonas palustris (strain HaA2).